We begin with the raw amino-acid sequence, 733 residues long: Polyribonucleotide nucleotidyltransferase (733 aa).

The Mg(2+) site is built by aspartate 488 and aspartate 494. In terms of domain architecture, KH spans proline 555–isoleucine 614. Residues glycine 624–lysine 692 form the S1 motif domain. The segment at threonine 698 to aspartate 733 is disordered. Basic and acidic residues predominate over residues isoleucine 702–lysine 721. Residues serine 722–aspartate 733 are compositionally biased toward basic residues.

Belongs to the polyribonucleotide nucleotidyltransferase family. Requires Mg(2+) as cofactor.

The protein localises to the cytoplasm. The enzyme catalyses RNA(n+1) + phosphate = RNA(n) + a ribonucleoside 5'-diphosphate. Involved in mRNA degradation. Catalyzes the phosphorolysis of single-stranded polyribonucleotides processively in the 3'- to 5'-direction. In Bartonella bacilliformis (strain ATCC 35685 / KC583 / Herrer 020/F12,63), this protein is Polyribonucleotide nucleotidyltransferase.